An 87-amino-acid chain; its full sequence is MNQNLSIRKRNKLKQDSGSPEAQISFLTLRVLQISSHLKMHTKDYSSKRGLRKVLGTRKRLLSYLCREDVSRYNKLLNNLGIRAAKK.

The segment at 1–20 (MNQNLSIRKRNKLKQDSGSP) is disordered.

It belongs to the universal ribosomal protein uS15 family. Part of the 30S ribosomal subunit.

It is found in the plastid. The protein resides in the chloroplast. The sequence is that of Small ribosomal subunit protein uS15c (rps15) from Zygnema circumcarinatum (Green alga).